The chain runs to 749 residues: 5-methyltetrahydropteroyltriglutamate--homocysteine methyltransferase (749 aa).

Residues 15 to 18 (RELK) and K114 contribute to the 5-methyltetrahydropteroyltri-L-glutamate site. L-homocysteine contacts are provided by residues 425–427 (IGS) and E478. L-methionine-binding positions include 425–427 (IGS) and E478. W555 serves as a coordination point for 5-methyltetrahydropteroyltri-L-glutamate. D593 serves as a coordination point for L-homocysteine. An L-methionine-binding site is contributed by D593. E599 serves as a coordination point for 5-methyltetrahydropteroyltri-L-glutamate. Zn(2+) contacts are provided by H636, C638, and E660. The active-site Proton donor is the H689. Position 721 (C721) interacts with Zn(2+).

The protein belongs to the vitamin-B12 independent methionine synthase family. Zn(2+) serves as cofactor.

It carries out the reaction 5-methyltetrahydropteroyltri-L-glutamate + L-homocysteine = tetrahydropteroyltri-L-glutamate + L-methionine. It functions in the pathway amino-acid biosynthesis; L-methionine biosynthesis via de novo pathway; L-methionine from L-homocysteine (MetE route): step 1/1. Its function is as follows. Catalyzes the transfer of a methyl group from 5-methyltetrahydrofolate to homocysteine resulting in methionine formation. In Streptococcus pneumoniae serotype 4 (strain ATCC BAA-334 / TIGR4), this protein is 5-methyltetrahydropteroyltriglutamate--homocysteine methyltransferase.